A 409-amino-acid chain; its full sequence is Dipeptidase 1 (409 aa).

A signal peptide spans 1-16 (MWTSWWLWPLVAVCAA). Residues His36 and Asp38 each contribute to the Zn(2+) site. Residue Asn57 is glycosylated (N-linked (GlcNAc...) asparagine). The cysteines at positions 87 and 170 are disulfide-linked. Residue Glu141 participates in Zn(2+) binding. Position 168 (His168) interacts with substrate. Zn(2+) contacts are provided by His214 and His235. A disulfide bridge links Cys242 with Cys274. Residue Arg246 participates in substrate binding. A glycan (N-linked (GlcNAc...) asparagine) is linked at Asn279. Asp304 provides a ligand contact to substrate. Ser384 is lipidated: GPI-anchor amidated serine. Positions 385–409 (AAPSLHLPPGSLLASLVPLLLLSLP) are cleaved as a propeptide — removed in mature form.

This sequence belongs to the metallo-dependent hydrolases superfamily. Peptidase M19 family. As to quaternary structure, homodimer; disulfide-linked. It depends on Zn(2+) as a cofactor.

Its subcellular location is the apical cell membrane. The protein localises to the cell projection. The protein resides in the microvillus membrane. It localises to the cell membrane. It carries out the reaction an L-aminoacyl-L-amino acid + H2O = 2 an L-alpha-amino acid. It catalyses the reaction leukotriene D4 + H2O = leukotriene E4 + glycine. The catalysed reaction is L-cystine-bis-glycine + 2 H2O = L-cystine + 2 glycine. The enzyme catalyses a beta-lactam + H2O = a substituted beta-amino acid. It carries out the reaction glycyldehydrophenylalanine + H2O = 2,3-didehydrophenylalanine + glycine. Its activity is regulated as follows. Inhibited by L-penicillamine. Inhibited by cilastatin. Hydrolyzes a wide range of dipeptides. Hydrolyzes the conversion of leukotriene D4 to leukotriene E4. Hydrolyzes cystinyl-bis-glycine (cys-bis-gly) formed during glutathione degradation. Also possesses beta lactamase activity and hydrolytically inactivates beta-lactam antibiotics. Functionally, independently of its dipeptidase activity, acts as an adhesion receptor for neutrophil recruitment from bloodstream into inflamed lungs and liver. The chain is Dipeptidase 1 (DPEP1) from Sus scrofa (Pig).